The following is a 57-amino-acid chain: MTTLIYLQIPVPEPIPGDPVPVPDPIPRPQPMPDPPPDEEPIKLSHRERRSARIRAC.

The tract at residues 7–57 is disordered; it reads LQIPVPEPIPGDPVPVPDPIPRPQPMPDPPPDEEPIKLSHRERRSARIRAC. Residues 11 to 35 are compositionally biased toward pro residues; sequence VPEPIPGDPVPVPDPIPRPQPMPDP. Positions 46 to 57 are enriched in basic residues; the sequence is HRERRSARIRAC.

The polypeptide is Protein YnaL (Escherichia coli (strain K12)).